We begin with the raw amino-acid sequence, 122 residues long: Succinate dehydrogenase assembly factor 2, mitochondrial (122 aa).

It belongs to the SDHAF2 family. As to quaternary structure, interacts with the flavoprotein subunit within the SDH catalytic dimer.

It is found in the mitochondrion matrix. In terms of biological role, plays an essential role in the assembly of succinate dehydrogenase (SDH), an enzyme complex (also referred to as respiratory complex II) that is a component of both the tricarboxylic acid (TCA) cycle and the mitochondrial electron transport chain, and which couples the oxidation of succinate to fumarate with the reduction of ubiquinone (coenzyme Q) to ubiquinol. Required for flavinylation (covalent attachment of FAD) of the flavoprotein subunit of the SDH catalytic dimer. In Caenorhabditis briggsae, this protein is Succinate dehydrogenase assembly factor 2, mitochondrial.